The sequence spans 156 residues: ATP synthase subunit b (156 aa).

Residues 7–27 form a helical membrane-spanning segment; that stretch reads LIGQTVAFIIFVWFCMKFVWP.

This sequence belongs to the ATPase B chain family. F-type ATPases have 2 components, F(1) - the catalytic core - and F(0) - the membrane proton channel. F(1) has five subunits: alpha(3), beta(3), gamma(1), delta(1), epsilon(1). F(0) has three main subunits: a(1), b(2) and c(10-14). The alpha and beta chains form an alternating ring which encloses part of the gamma chain. F(1) is attached to F(0) by a central stalk formed by the gamma and epsilon chains, while a peripheral stalk is formed by the delta and b chains.

The protein localises to the cell inner membrane. Its function is as follows. F(1)F(0) ATP synthase produces ATP from ADP in the presence of a proton or sodium gradient. F-type ATPases consist of two structural domains, F(1) containing the extramembraneous catalytic core and F(0) containing the membrane proton channel, linked together by a central stalk and a peripheral stalk. During catalysis, ATP synthesis in the catalytic domain of F(1) is coupled via a rotary mechanism of the central stalk subunits to proton translocation. In terms of biological role, component of the F(0) channel, it forms part of the peripheral stalk, linking F(1) to F(0). In Shewanella oneidensis (strain ATCC 700550 / JCM 31522 / CIP 106686 / LMG 19005 / NCIMB 14063 / MR-1), this protein is ATP synthase subunit b.